The following is a 456-amino-acid chain: Phosphomannomutase (456 aa).

The Phosphoserine intermediate role is filled by serine 98. Serine 98, aspartate 245, aspartate 247, and aspartate 249 together coordinate Mg(2+).

The protein belongs to the phosphohexose mutase family. The cofactor is Mg(2+).

It catalyses the reaction alpha-D-mannose 1-phosphate = D-mannose 6-phosphate. The protein operates within nucleotide-sugar biosynthesis; GDP-alpha-D-mannose biosynthesis; alpha-D-mannose 1-phosphate from D-fructose 6-phosphate: step 2/2. Involved in the biosynthesis of the capsular polysaccharide colanic acid. The protein is Phosphomannomutase (manB) of Escherichia coli (strain K12).